The following is a 935-amino-acid chain: Isoleucine--tRNA ligase (935 aa).

The 'HIGH' region signature appears at 58–68; that stretch reads PYANGNLHLGH. Glu-559 is an L-isoleucyl-5'-AMP binding site. The 'KMSKS' region signature appears at 600–604; it reads KMSKS. Lys-603 contributes to the ATP binding site. Zn(2+) contacts are provided by Cys-898, Cys-901, Cys-918, and Cys-921.

Belongs to the class-I aminoacyl-tRNA synthetase family. IleS type 1 subfamily. Monomer. Zn(2+) serves as cofactor.

Its subcellular location is the cytoplasm. It catalyses the reaction tRNA(Ile) + L-isoleucine + ATP = L-isoleucyl-tRNA(Ile) + AMP + diphosphate. Functionally, catalyzes the attachment of isoleucine to tRNA(Ile). As IleRS can inadvertently accommodate and process structurally similar amino acids such as valine, to avoid such errors it has two additional distinct tRNA(Ile)-dependent editing activities. One activity is designated as 'pretransfer' editing and involves the hydrolysis of activated Val-AMP. The other activity is designated 'posttransfer' editing and involves deacylation of mischarged Val-tRNA(Ile). The protein is Isoleucine--tRNA ligase of Haemophilus ducreyi (strain 35000HP / ATCC 700724).